We begin with the raw amino-acid sequence, 210 residues long: Secreted effector protein SteA (210 aa).

The protein localises to the secreted. The protein resides in the host cytoplasm. Functionally, effector proteins function to alter host cell physiology and promote bacterial survival in host tissues. Could be required for passage of bacteria from the peritoneal cavity into the spleen, for survival and replication within host cells, or for avoiding host immune response. This is Secreted effector protein SteA (steA) from Salmonella typhimurium (strain 14028s / SGSC 2262).